The sequence spans 150 residues: 3-hydroxyacyl-[acyl-carrier-protein] dehydratase FabZ (150 aa).

His-54 is a catalytic residue.

It belongs to the thioester dehydratase family. FabZ subfamily.

It is found in the cytoplasm. The enzyme catalyses a (3R)-hydroxyacyl-[ACP] = a (2E)-enoyl-[ACP] + H2O. Involved in unsaturated fatty acids biosynthesis. Catalyzes the dehydration of short chain beta-hydroxyacyl-ACPs and long chain saturated and unsaturated beta-hydroxyacyl-ACPs. This is 3-hydroxyacyl-[acyl-carrier-protein] dehydratase FabZ from Psychromonas ingrahamii (strain DSM 17664 / CCUG 51855 / 37).